The chain runs to 350 residues: DNA-directed RNA polymerase subunit alpha (350 aa).

The tract at residues 1 to 226 (MLISQRPTLS…ELFGLARELN (226 aa)) is alpha N-terminal domain (alpha-NTD). Positions 241 to 350 (ADHIASFALP…NQDYAETEQL (110 aa)) are alpha C-terminal domain (alpha-CTD). The interval 326-350 (ATGTWNSDAGYDLEDNQDYAETEQL) is disordered. Residues 336–350 (YDLEDNQDYAETEQL) show a composition bias toward acidic residues.

Belongs to the RNA polymerase alpha chain family. Homodimer. The RNAP catalytic core consists of 2 alpha, 1 beta, 1 beta' and 1 omega subunit. When a sigma factor is associated with the core the holoenzyme is formed, which can initiate transcription.

The catalysed reaction is RNA(n) + a ribonucleoside 5'-triphosphate = RNA(n+1) + diphosphate. DNA-dependent RNA polymerase catalyzes the transcription of DNA into RNA using the four ribonucleoside triphosphates as substrates. The polypeptide is DNA-directed RNA polymerase subunit alpha (Mycobacterium sp. (strain JLS)).